A 485-amino-acid polypeptide reads, in one-letter code: Delta(14)-sterol reductase (485 aa).

5 helical membrane-spanning segments follow: residues 18–38 (FFGPPGAFAISFLLPVLVYVF), 77–97 (GLVSWEASAATAGYILLSLIL), 131–151 (LAILAAGTAAQGAEFPVWTFI), 155–175 (FIQILTANTIFSYAVATFVYV), and 319–339 (SLGPVGLAVMLSLIGLGFYIF). NADP(+) is bound by residues Lys-346, Arg-350, Leu-373, Trp-378, and 385–386 (NY). The helical transmembrane segment at 431-451 (AKGWGMLITYFYILYFAILLI) threads the bilayer. NADP(+)-binding positions include Asp-457, 461–465 (CHRKY), and Tyr-472.

Belongs to the ERG4/ERG24 family.

It is found in the membrane. It catalyses the reaction 4,4-dimethyl-5alpha-cholesta-8,24-dien-3beta-ol + NADP(+) = 4,4-dimethyl-5alpha-cholesta-8,14,24-trien-3beta-ol + NADPH + H(+). It functions in the pathway steroid biosynthesis; zymosterol biosynthesis; zymosterol from lanosterol: step 2/6. Its function is as follows. Reduces the C14=C15 double bond of 4,4-dimethyl-cholesta-8,14,24-trienol to produce 4,4-dimethyl-cholesta-8,24-dienol. In Fusarium vanettenii (Neocosmospora pisi), this protein is Delta(14)-sterol reductase.